We begin with the raw amino-acid sequence, 638 residues long: Exocyst complex component EXO70A1 (638 aa).

Positions F163–D190 are disordered.

This sequence belongs to the EXO70 family. As to quaternary structure, the exocyst complex is composed of SEC3, SEC5, SEC6, SEC8, SEC10, EXO70A1 and EXO84B. Interacts with SEC3A and EXO84B. Co-localizes with FPP3/VETH1, FPP2/VETH2 and COG2 in vesicle-like small motile compartments. May interact with COG2.

The protein localises to the cytoplasm. It localises to the cytosol. It is found in the cytoskeleton. The protein resides in the phragmoplast. Its subcellular location is the cell membrane. The protein localises to the secreted. It localises to the cell wall. Functionally, component of the exocyst complex involved in the docking of exocytic vesicles with fusion sites on the plasma membrane during regulated or polarized secretion. Involved in polarized cell growth and organ morphogenesis. Involved in polarized cell growth and organ morphogenesis. During cytokinesis, involved in cell plate initiation, cell plate maturation and formation of new primary cell wall. Participates in polarized pectin delivery required for the polarized development of the mucilage-producing volcano cells of the seed coat. Involved in the recycling and localization of auxin efflux carriers PIN1 and PIN2, and thus in polar auxin transport regulation. Functions in vesicle trafficking in tracheary elements to regulate patterned secondary cell wall (SCW) thickening. This chain is Exocyst complex component EXO70A1, found in Arabidopsis thaliana (Mouse-ear cress).